A 21-amino-acid chain; its full sequence is Peptide PGLa-R3 (21 aa).

Leucine amide is present on Leu21.

Expressed by the skin glands.

The protein resides in the secreted. In terms of biological role, antimicrobial peptide. The sequence is that of Peptide PGLa-R3 from Xenopus ruwenzoriensis (Uganda clawed frog).